The sequence spans 739 residues: Transcription activator of gluconeogenesis MCYG_04674 (739 aa).

Residues 1–33 (MSPHQTTGQESDNMAVNGENAQASSQYIQLNSE) are compositionally biased toward polar residues. A disordered region spans residues 1-62 (MSPHQTTGQE…PSRPKRKKAK (62 aa)). Over residues 40-55 (AAEKKAAAAKAKDPSR) the composition is skewed to basic and acidic residues. Positions 65–93 (CYACQRGHLTCGDERPCQRCIKRGFQDAC) form a DNA-binding region, zn(2)-C6 fungal-type. Disordered regions lie at residues 174–223 (GPEN…QFNS), 264–308 (DTPP…GDSG), 380–420 (SRQN…HKNA), 537–574 (NHNV…STTA), and 639–668 (AQNN…GQRR). Composition is skewed to polar residues over residues 267–284 (PSDN…SSGT) and 397–411 (PVVS…NLNI). The span at 547–557 (GLLTGSTSRGS) shows a compositional bias: low complexity. Polar residues predominate over residues 562-574 (PYSSDQFNSSTTA). The span at 653 to 664 (NSSSNGTTSTGR) shows a compositional bias: low complexity.

It belongs to the ERT1/acuK family.

It localises to the nucleus. Transcription factor which regulates nonfermentable carbon utilization. Activator of gluconeogenetic genes. This is Transcription activator of gluconeogenesis MCYG_04674 from Arthroderma otae (strain ATCC MYA-4605 / CBS 113480) (Microsporum canis).